Here is a 146-residue protein sequence, read N- to C-terminus: Hemoglobin subunit beta (146 aa).

Position 1 is an N-acetylvaline (V1). One can recognise a Globin domain in the interval H2 to H146. T12 bears the Phosphothreonine mark. S44 is modified (phosphoserine). K59 carries the post-translational modification N6-acetyllysine. H63 provides a ligand contact to heme b. At K82 the chain carries N6-acetyllysine. H92 serves as a coordination point for heme b. C93 bears the S-nitrosocysteine mark. At K144 the chain carries N6-acetyllysine.

Belongs to the globin family. In terms of assembly, heterotetramer of two alpha chains and two beta chains. In terms of tissue distribution, red blood cells.

In terms of biological role, involved in oxygen transport from the lung to the various peripheral tissues. The protein is Hemoglobin subunit beta of Peromyscus californicus (California mouse).